Here is a 621-residue protein sequence, read N- to C-terminus: Lamin-C (621 aa).

Residues 1 to 47 (MSARRVTLNTRVSRASTSTPVGGASTSSRVGATSPTSPTRTSRQQEK) form a disordered region. Positions 1–47 (MSARRVTLNTRVSRASTSTPVGGASTSSRVGATSPTSPTRTSRQQEK) are head. Over residues 7–31 (TLNTRVSRASTSTPVGGASTSSRVG) the composition is skewed to polar residues. Low complexity predominate over residues 33 to 42 (TSPTSPTRTS). Ser34 bears the Phosphoserine mark. An IF rod domain is found at 46-402 (EKEELQHLND…KLLCGEERRL (357 aa)). A coil 1A region spans residues 47-85 (KEELQHLNDRLACYIDRMRNLENENSRLTQELNLAQDTV). The linker 1 stretch occupies residues 86-95 (NRETSNLKAV). The interval 96-233 (YEKELAAARK…QVHTQELTET (138 aa)) is coil 1B. The interval 234 to 257 (RSRRQIEISEIDGRLSRQYEAKLQ) is linker 2. Residues 258 to 403 (QSLQELRDQY…LLCGEERRLN (146 aa)) form a coil 2 region. The tract at residues 404 to 458 (IESPGRPTTDSGISSNGSHLTASASSRSGRVTPSGRRSATPGISGSSAVKRRRTV) is disordered. A tail region spans residues 404–621 (IESPGRPTTD…GVRSLFSLLF (218 aa)). A phosphoserine mark is found at Ser406 and Ser441. Positions 409 to 450 (RPTTDSGISSNGSHLTASASSRSGRVTPSGRRSATPGISGSS) are enriched in polar residues. Thr443 carries the post-translational modification Phosphothreonine. The Nuclear localization signal motif lies at 453–458 (KRRRTV). An LTD domain is found at 468-582 (SEYSVNAAAK…EDVASYDRVR (115 aa)). The disordered stretch occupies residues 585–605 (VSSHTSRHRSSGTPSTGFTLG).

This sequence belongs to the intermediate filament family. As to quaternary structure, interacts with MAN1. As to expression, first detected from late stage 12 in the oenocytes, abdominal segments, hindgut and posterior spiracles, with expression increasing in stage 13 (at protein level). In stage 14, also becomes detectable in the foregut (at protein level). Stage 15 shows expression in the epidermis, dorsal longitudinal trunk, pharynx, esophagus and proventriculus, with the dorsal pharyngeal musculature showing expression in late stage 15 (at protein level). In stage 16 embryos, also detected in the exit glia with increasing expression in the somatic musculature (at protein level). Also detected in the visceral mesoderm but not in the midgut or central nervous system until the end of embryogenesis (at protein level). In third instar larvae, detectable at varying levels in all cell types (at protein level). Expressed in spermatocytes (at protein level).

The protein resides in the nucleus. It is found in the nucleus lamina. Lamins are components of the nuclear lamina, a fibrous layer on the nucleoplasmic side of the inner nuclear membrane, which is thought to provide a framework for the nuclear envelope and may also interact with chromatin. In spermatocytes, regulates cytokinesis during meiosis. This chain is Lamin-C (LamC), found in Drosophila melanogaster (Fruit fly).